Consider the following 129-residue polypeptide: Small ribosomal subunit protein uS8 (129 aa).

This sequence belongs to the universal ribosomal protein uS8 family. As to quaternary structure, part of the 30S ribosomal subunit. Contacts proteins S5 and S12.

Its function is as follows. One of the primary rRNA binding proteins, it binds directly to 16S rRNA central domain where it helps coordinate assembly of the platform of the 30S subunit. This is Small ribosomal subunit protein uS8 from Mycoplasma mycoides subsp. mycoides SC (strain CCUG 32753 / NCTC 10114 / PG1).